A 414-amino-acid chain; its full sequence is Serine hydroxymethyltransferase (414 aa).

Residues L116 and 120 to 122 (GHL) contribute to the (6S)-5,6,7,8-tetrahydrofolate site. N6-(pyridoxal phosphate)lysine is present on K224. (6S)-5,6,7,8-tetrahydrofolate contacts are provided by residues E240 and 348 to 350 (SPF).

It belongs to the SHMT family. As to quaternary structure, homodimer. It depends on pyridoxal 5'-phosphate as a cofactor.

Its subcellular location is the cytoplasm. It catalyses the reaction (6R)-5,10-methylene-5,6,7,8-tetrahydrofolate + glycine + H2O = (6S)-5,6,7,8-tetrahydrofolate + L-serine. It functions in the pathway one-carbon metabolism; tetrahydrofolate interconversion. The protein operates within amino-acid biosynthesis; glycine biosynthesis; glycine from L-serine: step 1/1. Functionally, catalyzes the reversible interconversion of serine and glycine with tetrahydrofolate (THF) serving as the one-carbon carrier. This reaction serves as the major source of one-carbon groups required for the biosynthesis of purines, thymidylate, methionine, and other important biomolecules. Also exhibits THF-independent aldolase activity toward beta-hydroxyamino acids, producing glycine and aldehydes, via a retro-aldol mechanism. The sequence is that of Serine hydroxymethyltransferase from Campylobacter jejuni subsp. jejuni serotype O:23/36 (strain 81-176).